The following is a 328-amino-acid chain: D-cysteine desulfhydrase (328 aa).

Position 51 is an N6-(pyridoxal phosphate)lysine (Lys-51).

Belongs to the ACC deaminase/D-cysteine desulfhydrase family. In terms of assembly, homodimer. The cofactor is pyridoxal 5'-phosphate.

The enzyme catalyses D-cysteine + H2O = hydrogen sulfide + pyruvate + NH4(+) + H(+). In terms of biological role, catalyzes the alpha,beta-elimination reaction of D-cysteine and of several D-cysteine derivatives. It could be a defense mechanism against D-cysteine. The chain is D-cysteine desulfhydrase from Escherichia coli (strain SMS-3-5 / SECEC).